The sequence spans 311 residues: JNK1/MAPK8-associated membrane protein (311 aa).

Residues 1 to 57 lie on the Lumenal side of the membrane; sequence MAVDIQPACLGLYCGKTLLFKNGSSEIYGECGVCPRGQRTNAQKYCQPCTESPELYD. N22 carries an N-linked (GlcNAc...) asparagine glycan. The chain crosses the membrane as a helical span at residues 58 to 78; sequence WLYLGFMAMLPLVLHWFFIEW. Residues 79–87 are Cytoplasmic-facing; that stretch reads YSGKKSSSA. Residues 88-108 traverse the membrane as a helical segment; that stretch reads LFQHITALFECTMAAIITLLV. Over 109–149 the chain is Lumenal; sequence SDPVGVLYIRSCRVLMLSDWYTMLYNPSPDYVTTVHCTHEA. Residues 150–170 traverse the membrane as a helical segment; sequence VYPLYTIVFVYYAFCLVLMML. The Cytoplasmic portion of the chain corresponds to 171-188; it reads LRPLLVKKIACGLGKSDR. The helical transmembrane segment at 189–209 threads the bilayer; sequence FKSIYAALYFFPILTVLQAVG. G210 is a topological domain (lumenal). Residues 211 to 231 form a helical membrane-spanning segment; sequence GLLYYAFPYIILVLSLVTLAV. Residues 232–250 lie on the Cytoplasmic side of the membrane; the sequence is YMSASEIENCYDLLVRKKR. A helical membrane pass occupies residues 251-271; that stretch reads LIVLFSHWLLHAYGIVSISRV. Residues 272–277 are Lumenal-facing; it reads DRLEHD. A helical membrane pass occupies residues 278-298; that stretch reads LPLLALVPTPALFYLFTAKFT. Over 299 to 311 the chain is Cytoplasmic; that stretch reads EPSRILSEGANGH.

In terms of assembly, interacts with RNF5 and MAPK8, but not with MAPK9. Binding to MAPK8 occurs before and after exposure to stress, such as UV irradiation. After exposure to stress, interacts with phosphorylated MAPK8. Competes with DUSP10 for MAPK8 binding. Associates with multiple components of the proteasome and with ERAD regulatory proteins, including AMFR/GP78, CANX, PSMC1, PSMC2, PSMC3/TBP1, PSMC5, PSMC6, PSMD8, SEC61-ALPHA and UFD1. Ubiquitinated by RNF5 via 'Lys-63'-linked ubiquitin linkage in a UBE2N-dependent manner. Ubiquitination decreases association with components of the proteasome and ERAD. As to expression, expressed in numerous tissues, including brain, spleen, thymus, liver, kidney and testis.

The protein resides in the endoplasmic reticulum membrane. Functionally, regulates the duration of MAPK8 activity in response to various stress stimuli. Facilitates degradation of misfolded endoplasmic reticulum (ER) proteins through the recruitment of components of the proteasome and endoplasmic reticulum-associated degradation (ERAD) system. This Mus musculus (Mouse) protein is JNK1/MAPK8-associated membrane protein (Jkamp).